The sequence spans 232 residues: Large ribosomal subunit protein uL1 (232 aa).

The protein belongs to the universal ribosomal protein uL1 family. As to quaternary structure, part of the 50S ribosomal subunit.

Its function is as follows. Binds directly to 23S rRNA. The L1 stalk is quite mobile in the ribosome, and is involved in E site tRNA release. Functionally, protein L1 is also a translational repressor protein, it controls the translation of the L11 operon by binding to its mRNA. In Bartonella bacilliformis (strain ATCC 35685 / KC583 / Herrer 020/F12,63), this protein is Large ribosomal subunit protein uL1.